A 316-amino-acid chain; its full sequence is ATP synthase gamma chain (316 aa).

It belongs to the ATPase gamma chain family. As to quaternary structure, F-type ATPases have 2 components, CF(1) - the catalytic core - and CF(0) - the membrane proton channel. CF(1) has five subunits: alpha(3), beta(3), gamma(1), delta(1), epsilon(1). CF(0) has three main subunits: a, b and c.

It is found in the cellular thylakoid membrane. Produces ATP from ADP in the presence of a proton gradient across the membrane. The gamma chain is believed to be important in regulating ATPase activity and the flow of protons through the CF(0) complex. The sequence is that of ATP synthase gamma chain from Prochlorococcus marinus (strain MIT 9313).